The chain runs to 193 residues: Cytidylate kinase (193 aa).

Position 12–20 (12–20 (GLAGSGTTT)) interacts with ATP.

This sequence belongs to the cytidylate kinase family. Type 2 subfamily.

It is found in the cytoplasm. It catalyses the reaction CMP + ATP = CDP + ADP. The enzyme catalyses dCMP + ATP = dCDP + ADP. The chain is Cytidylate kinase from Thermococcus kodakarensis (strain ATCC BAA-918 / JCM 12380 / KOD1) (Pyrococcus kodakaraensis (strain KOD1)).